The sequence spans 294 residues: Mitochondrial glycine transporter (294 aa).

Solcar repeat units follow at residues 5-84, 102-186, and 208-292; these read RRAT…IRQA, LNMY…MKVL, and ASTL…IVKK. Helical transmembrane passes span 11 to 36, 59 to 85, 108 to 133, 161 to 184, 212 to 238, and 267 to 285; these read LIGG…TRLQ, GALP…RQAI, MFSG…VRYE, GFGA…DRMK, INGS…KTRM, and GISL…AWGI.

It belongs to the mitochondrial carrier (TC 2.A.29) family. SLC25A38 subfamily.

It localises to the mitochondrion inner membrane. The catalysed reaction is glycine(in) = glycine(out). In terms of biological role, mitochondrial glycine transporter that imports glycine into the mitochondrial matrix. Plays an important role in providing glycine for the first enzymatic step in heme biosynthesis, the condensation of glycine with succinyl-CoA to produce 5-aminolevulinate (ALA) in the mitochondrial matrix. The polypeptide is Mitochondrial glycine transporter (Kluyveromyces lactis (strain ATCC 8585 / CBS 2359 / DSM 70799 / NBRC 1267 / NRRL Y-1140 / WM37) (Yeast)).